The chain runs to 935 residues: Inter-alpha-trypsin inhibitor heavy chain H2 (935 aa).

A signal peptide spans 1–18 (MKGLTCFLLCFLLSEAQG). Positions 19-53 (FEIPTNGLSEFAEYGDLAELALGKFHVVPGNRRSQ) are excised as a propeptide. The VIT domain maps to 45–174 (VVPGNRRSQE…KVQFELHYQE (130 aa)). An N-linked (GlcNAc...) asparagine glycan is attached at Asn107. Glu271 carries the post-translational modification 4-carboxyglutamate. The VWFA domain maps to 297–457 (PKNILFVIDV…YDFLKRLSND (161 aa)). Residue Asn434 is glycosylated (N-linked (GlcNAc...) asparagine). Ser455 bears the Phosphoserine mark. The residue at position 691 (Asp691) is an Aspartate 1-(chondroitin 4-sulfate)-ester. A propeptide spanning residues 692-935 (PHFIIYLPRS…PLLYSFLKRP (244 aa)) is cleaved from the precursor. Residue Ser875 is modified to Phosphoserine.

It belongs to the ITIH family. In terms of assembly, I-alpha-I plasma protease inhibitors are assembled from one or two heavy chains (HC) and one light chain, bikunin. Inter-alpha-inhibitor (I-alpha-I) is composed of ITIH1/HC1, ITIH2/HC2 and bikunin. In terms of processing, heavy chains are linked to bikunin via chondroitin 4-sulfate esterified to the alpha-carboxyl of the C-terminal aspartate after propeptide cleavage. Post-translationally, phosphorylated by FAM20C in the extracellular medium.

The protein localises to the secreted. Functionally, may act as a carrier of hyaluronan in serum or as a binding protein between hyaluronan and other matrix protein, including those on cell surfaces in tissues to regulate the localization, synthesis and degradation of hyaluronan which are essential to cells undergoing biological processes. The sequence is that of Inter-alpha-trypsin inhibitor heavy chain H2 (ITIH2) from Sus scrofa (Pig).